Consider the following 507-residue polypeptide: Maturase K (507 aa).

It belongs to the intron maturase 2 family. MatK subfamily.

The protein resides in the plastid. It is found in the chloroplast. In terms of biological role, usually encoded in the trnK tRNA gene intron. Probably assists in splicing its own and other chloroplast group II introns. This Cananga odorata (Ylang-ylang tree) protein is Maturase K.